Consider the following 484-residue polypeptide: 6-phosphogluconate dehydrogenase, decarboxylating (484 aa).

Residues 11–16 (GLAVMG), 34–36 (NRT), 76–78 (VRA), and Asn-104 each bind NADP(+). Substrate-binding positions include Asn-104 and 130-132 (SGG). Lys-185 acts as the Proton acceptor in catalysis. Residue 188–189 (HN) participates in substrate binding. Catalysis depends on Glu-192, which acts as the Proton donor. Substrate contacts are provided by Tyr-193, Lys-262, Arg-289, Arg-447, and His-453.

It belongs to the 6-phosphogluconate dehydrogenase family. In terms of assembly, homodimer.

The catalysed reaction is 6-phospho-D-gluconate + NADP(+) = D-ribulose 5-phosphate + CO2 + NADPH. It participates in carbohydrate degradation; pentose phosphate pathway; D-ribulose 5-phosphate from D-glucose 6-phosphate (oxidative stage): step 3/3. Functionally, catalyzes the oxidative decarboxylation of 6-phosphogluconate to ribulose 5-phosphate and CO(2), with concomitant reduction of NADP to NADPH. This is 6-phosphogluconate dehydrogenase, decarboxylating (gnd) from Haemophilus influenzae (strain ATCC 51907 / DSM 11121 / KW20 / Rd).